Consider the following 531-residue polypeptide: UDP-glucuronosyltransferase 1A6 (531 aa).

Positions 1–26 are cleaved as a signal peptide; that stretch reads MACLLPAAQTLPAGFLFLVLWASVLG. Asn-293 and Asn-431 each carry an N-linked (GlcNAc...) asparagine glycan. A helical membrane pass occupies residues 489-505; that stretch reads VIGFLLAIVLTVVFIVF.

This sequence belongs to the UDP-glycosyltransferase family. In terms of tissue distribution, expressed in liver, kidney and at very low levels in colon.

It is found in the microsome. The protein resides in the endoplasmic reticulum membrane. The enzyme catalyses glucuronate acceptor + UDP-alpha-D-glucuronate = acceptor beta-D-glucuronoside + UDP + H(+). It carries out the reaction (5Z,8Z,11Z,14Z)-eicosatetraenoate + UDP-alpha-D-glucuronate = O-[(5Z),(8Z),(11Z),(14Z)-eicosatetraenoyl]-beta-D-glucuronate + UDP. It catalyses the reaction 15-hydroxy-(5Z,8Z,11Z,13E)-eicosatetraenoate + UDP-alpha-D-glucuronate = 15-O-(beta-D-glucuronosyl)-(5Z,8Z,11Z,14Z)-eicosatetraenoate + UDP + H(+). The catalysed reaction is (E)-ferulate + UDP-alpha-D-glucuronate = (E)-4-O-(beta-D-glucuronosyl)-ferulate + UDP + H(+). The enzyme catalyses (E)-ferulate + UDP-alpha-D-glucuronate = (E)-ferulic acid beta-D-glucuronate ester + UDP. In terms of biological role, UDP-glucuronosyltransferase (UGT) that catalyzes phase II biotransformation reactions in which lipophilic substrates are conjugated with glucuronic acid to facilitate their inactivation and excretion from the body. Essential for the elimination and detoxification of drugs, xenobiotics and endogenous compounds. Involved in the glucuronidation of arachidonic acid (AA) and AA-derived eicosanoids including 15-HETE and 20-HETE. Conjugates small planar phenolic molecules such as 4-nitrophenol, 1-naphthol, and 4-methylumbelliferone. The bulky phenol 4-hydroxybiphenyl, androgens and estrogens are not substrates. 2-hydroxybiphenyl is an excellent substrate. Involved in the glucuronidation of the phytochemical ferulic acid at the phenolic or the carboxylic acid group. This is UDP-glucuronosyltransferase 1A6 from Mus musculus (Mouse).